Here is a 117-residue protein sequence, read N- to C-terminus: Biofilm growth-associated repressor (117 aa).

Residues 20 to 114 form the HTH arsR-type domain; it reads AMEKRATEVA…ALYAIFCAPE (95 aa). Positions 54 to 77 form a DNA-binding region, H-T-H motif; that stretch reads VGELEAKLDIRQPTLSQQLGVLRE.

Represses an operon that comprises at least itself and blh. Binds to a palindromic AT-rich sequence spanning the -10 region of the blh promoter and blocks transcription of the operon. The chain is Biofilm growth-associated repressor (bigR) from Agrobacterium fabrum (strain C58 / ATCC 33970) (Agrobacterium tumefaciens (strain C58)).